The sequence spans 910 residues: Protein translocase subunit SecA (910 aa).

ATP-binding positions include Gln-86, 104 to 108 (GEGKT), and Asp-499. Zn(2+) is bound by residues Cys-894, Cys-896, Cys-905, and His-906.

The protein belongs to the SecA family. In terms of assembly, monomer and homodimer. Part of the essential Sec protein translocation apparatus which comprises SecA, SecYEG and auxiliary proteins SecDF-YajC and YidC. Zn(2+) is required as a cofactor.

The protein localises to the cell inner membrane. It localises to the cytoplasm. The enzyme catalyses ATP + H2O + cellular proteinSide 1 = ADP + phosphate + cellular proteinSide 2.. Functionally, part of the Sec protein translocase complex. Interacts with the SecYEG preprotein conducting channel. Has a central role in coupling the hydrolysis of ATP to the transfer of proteins into and across the cell membrane, serving both as a receptor for the preprotein-SecB complex and as an ATP-driven molecular motor driving the stepwise translocation of polypeptide chains across the membrane. The sequence is that of Protein translocase subunit SecA from Rickettsia bellii (strain OSU 85-389).